A 445-amino-acid chain; its full sequence is Sterile alpha motif domain-containing protein 7 (445 aa).

A required for localization to nuclear polycomb bodies region spans residues 98–172 (HAARAEMEMY…HLQGNPILLA (75 aa)). Residues 193–282 (YQKPPESDTE…WDDGKGKPSE (90 aa)) are disordered. Basic and acidic residues predominate over residues 227–244 (IKDPDIEVDNQQKPRVAD). Residues 324-378 (WTVDDVYNFIRSLPGCSDYAQVFKDHAIDGETLPLLTEQHLRGTMGLKLGPALKI) enclose the SAM domain. The segment at 425–445 (SIPGPQDLLSPKRTEQDVMRN) is disordered. The span at 434–445 (SPKRTEQDVMRN) shows a compositional bias: basic and acidic residues.

Monomer, homodimer and homooligomer. Component of a Polycomb group (PcG) multiprotein PRC1-like complex. Interacts with PHC2 and NR2E3. Interacts with RNF1 in a PHC2-dependent manner. Interacts with SAMD11. Expressed in the retina and the pineal gland. In the retina, it is predominantly expressed in the outer nuclear layer and developing rod photoreceptors.

It is found in the nucleus. The protein resides in the cytoplasm. Functionally, component of a Polycomb group (PcG) multiprotein PRC1-like complex, essential for establishing rod photoreceptor cell identity and function by silencing nonrod gene expression in developing rod photoreceptor cells. Via its association with the PRC1-like complex, promotes epigenetic repressive marks H3K27me3 and H2AK119ub marks in nonrod genes, silencing their transcription. Represses Crx-controlled photoreceptor-specific gene expression. In Mus musculus (Mouse), this protein is Sterile alpha motif domain-containing protein 7 (Samd7).